The sequence spans 779 residues: Phosphoribosylformylglycinamidine synthase subunit PurL (779 aa).

His-52 is an active-site residue. The ATP site is built by Tyr-55 and Lys-94. Mg(2+) is bound at residue Glu-96. Substrate contacts are provided by residues 97–100 (SHNH) and Arg-119. Residue His-98 is the Proton acceptor of the active site. Asp-120 serves as a coordination point for Mg(2+). Residue Gln-243 coordinates substrate. Asp-271 lines the Mg(2+) pocket. Substrate is bound at residue 315-317 (ESQ). ATP is bound by residues Asn-523 and Gly-560. Residue Asn-561 coordinates Mg(2+). A substrate-binding site is contributed by Ser-563.

It belongs to the FGAMS family. In terms of assembly, monomer. Part of the FGAM synthase complex composed of 1 PurL, 1 PurQ and 2 PurS subunits.

The protein localises to the cytoplasm. It carries out the reaction N(2)-formyl-N(1)-(5-phospho-beta-D-ribosyl)glycinamide + L-glutamine + ATP + H2O = 2-formamido-N(1)-(5-O-phospho-beta-D-ribosyl)acetamidine + L-glutamate + ADP + phosphate + H(+). The protein operates within purine metabolism; IMP biosynthesis via de novo pathway; 5-amino-1-(5-phospho-D-ribosyl)imidazole from N(2)-formyl-N(1)-(5-phospho-D-ribosyl)glycinamide: step 1/2. Its function is as follows. Part of the phosphoribosylformylglycinamidine synthase complex involved in the purines biosynthetic pathway. Catalyzes the ATP-dependent conversion of formylglycinamide ribonucleotide (FGAR) and glutamine to yield formylglycinamidine ribonucleotide (FGAM) and glutamate. The FGAM synthase complex is composed of three subunits. PurQ produces an ammonia molecule by converting glutamine to glutamate. PurL transfers the ammonia molecule to FGAR to form FGAM in an ATP-dependent manner. PurS interacts with PurQ and PurL and is thought to assist in the transfer of the ammonia molecule from PurQ to PurL. In Prochlorococcus marinus (strain MIT 9301), this protein is Phosphoribosylformylglycinamidine synthase subunit PurL.